Here is a 55-residue protein sequence, read N- to C-terminus: Large ribosomal subunit protein bL33 (55 aa).

The protein belongs to the bacterial ribosomal protein bL33 family.

This chain is Large ribosomal subunit protein bL33, found in Bifidobacterium longum (strain DJO10A).